A 157-amino-acid polypeptide reads, in one-letter code: MVDLKTKKVIIIGDRDGVPGEAIKLCAESAGAEVVYAATECFVUTSAGAMDLENQKRVKDLAEKYGPENVIVLLGGAEAESSGLACETVTVGDPTFAGPLAGVSLGLLCYHVAEPEIKSQIDPAVYEEQVSMMEMVMDVNAIIAEISEYRNKGCKFL.

U44 is an active-site residue. U44 is a non-standard amino acid (selenocysteine).

Belongs to the GrdA family. Monomer. Component of the glycine, sarcosine and betaine reductase complexes, together with components B and C.

The catalysed reaction is acetyl phosphate + [thioredoxin]-disulfide + NH4(+) + H2O = [thioredoxin]-dithiol + glycine + phosphate + H(+). It carries out the reaction acetyl phosphate + methylamine + [thioredoxin]-disulfide + H2O = sarcosine + [thioredoxin]-dithiol + phosphate + H(+). The enzyme catalyses acetyl phosphate + trimethylamine + [thioredoxin]-disulfide + H2O = glycine betaine + [thioredoxin]-dithiol + phosphate + H(+). In terms of biological role, in the first step of glycine, betaine and sarcosine reductases, the substrate is bound to component PB via a Schiff base intermediate. Then the PB-activated substrate is nucleophilically attacked by the selenol anion of component PA to transform it to a carboxymethylated selenoether and the respective amine. By action of component PC, acetyl phosphate is formed, leaving component PA in its oxidized state. Finally component PA becomes reduced by the thioredoxin system to start a new catalytic cycle of reductive deamination. This Treponema denticola (strain ATCC 35405 / DSM 14222 / CIP 103919 / JCM 8153 / KCTC 15104) protein is Glycine/sarcosine/betaine reductase complex component A (grdA).